The primary structure comprises 394 residues: Fatty acid resistance protein FarA (394 aa).

The disordered stretch occupies residues 1-23 (MKSGNSEPNLMETHTDETKLQNT). Residues 33 to 53 (ALTLLFALSAAAAGSAFFLWW) form a helical membrane-spanning segment. The tract at residues 356–376 (SAAGAPVSKTPGAALPEMEST) is disordered.

Belongs to the membrane fusion protein (MFP) (TC 8.A.1) family. As to quaternary structure, probably part of a tripartite efflux system FarAB-MtrE, which is composed of an inner membrane transporter, FarB, a periplasmic membrane fusion protein, FarA, and an outer membrane component, MtrE.

Its subcellular location is the cell inner membrane. Functionally, mediates resistance to long-chained antibacterial fatty acids (FAs). Function is dependent on the MtrE outer membrane protein. This chain is Fatty acid resistance protein FarA, found in Neisseria gonorrhoeae.